Reading from the N-terminus, the 233-residue chain is Bcl-2-like protein 1 (233 aa).

Positions 4 to 24 (SNRELVVDFLSYKLSQKGYSW) match the BH4 motif. The segment at 27 to 73 (FSDVEENRTEAPEETEPERETPSAINGNPSWHLADSPAVNGATGHSS) is disordered. Serine 49 carries the post-translational modification Phosphoserine; by PLK3. Phosphoserine; by CDK1 is present on serine 62. A BH3 motif is present at residues 86-100 (VKQALREAGDEFELR). The short motif at 129-148 (ELFRDGVNWGRIVAFFSFGG) is the BH1 element. Residues 180–195 (PWIQENGGWDTFVDLY) carry the BH2 motif. Residues 210 to 226 (FNRWFLTGMTVAGVVLL) traverse the membrane as a helical segment.

The protein belongs to the Bcl-2 family. Homodimer. Interacts with BCL2L11. Interacts with BAD. Interacts with PGAM5. Interacts with HEBP2. Interacts with p53/TP53 and BBC3; interaction with BBC3 disrupts the interaction with p53/TP53. Interacts with ATP5F1A and ATP5F1B; the interactions mediate the association of isoform Bcl-X(L) with the mitochondrial membrane ATP synthase F(1)F(0) ATP synthase. Interacts with VDAC1. Interacts with BCL2L11 (via BH3). Interacts with RNF183. Interacts with GIMAP3/IAN4 and GIMAP5/IAN5. Interacts with GIMAP5 and HSPA8/HSC70; the interaction between HSPA8 and BCL2L1 is impaired in the absence of GIMAP5. Interacts with isoform 4 of CLU; this interaction releases and activates BAX and promotes cell death. As to quaternary structure, forms heterodimers with BAX, BAK or BCL2; heterodimerization with BAX does not seem to be required for anti-apoptotic activity. Interacts with isoform 1 of SIVA1; the interaction inhibits the anti-apoptotic activity. Interacts with IKZF3. Interacts with RTL10/BOP. Interacts with DNM1L and CLTA; DNM1L and BCL2L1 isoform BCL-X(L) may form a complex in synaptic vesicles that also contains clathrin and MFF. Interacts (via the loop between motifs BH4 and BH3) with NLRP1 (via LRR repeats), but not with NLRP2, NLRP3, NLRP4, PYCARD, nor MEFV. Interacts with BECN1. Proteolytically cleaved by caspases during apoptosis. The cleaved protein, lacking the BH4 motif, has pro-apoptotic activity. In terms of processing, phosphorylated on Ser-62 by CDK1. This phosphorylation is partial in normal mitotic cells, but complete in G2-arrested cells upon DNA-damage, thus promoting subsequent apoptosis probably by triggering caspases-mediated proteolysis. Phosphorylated by PLK3, leading to regulate the G2 checkpoint and progression to cytokinesis during mitosis. Phosphorylation at Ser-49 appears during the S phase and G2, disappears rapidly in early mitosis during prometaphase, metaphase and early anaphase, and re-appears during telophase and cytokinesis. Post-translationally, ubiquitinated by RNF183 during prolonged ER stress, leading to degradation by the proteosome. Expressed in most tissues. Bcl-X(beta) is specifically expressed in cerebellum, heart, and thymus. In the ovary, the predominant form is Bcl-X(L), with a small but detectable level of Bcl-X(S).

It localises to the mitochondrion inner membrane. The protein resides in the mitochondrion outer membrane. Its subcellular location is the mitochondrion matrix. The protein localises to the cytoplasmic vesicle. It is found in the secretory vesicle. It localises to the synaptic vesicle membrane. The protein resides in the cytoplasm. Its subcellular location is the cytosol. The protein localises to the cytoskeleton. It is found in the microtubule organizing center. It localises to the centrosome. The protein resides in the nucleus membrane. In terms of biological role, potent inhibitor of cell death. Inhibits activation of caspases. Appears to regulate cell death by blocking the voltage-dependent anion channel (VDAC) by binding to it and preventing the release of the caspase activator, CYC1, from the mitochondrial membrane. Also acts as a regulator of G2 checkpoint and progression to cytokinesis during mitosis. Isoform Bcl-X(L) also regulates presynaptic plasticity, including neurotransmitter release and recovery, number of axonal mitochondria as well as size and number of synaptic vesicle clusters. During synaptic stimulation, increases ATP availability from mitochondria through regulation of mitochondrial membrane ATP synthase F(1)F(0) activity and regulates endocytic vesicle retrieval in hippocampal neurons through association with DMN1L and stimulation of its GTPase activity in synaptic vesicles. May attenuate inflammation impairing NLRP1-inflammasome activation, hence CASP1 activation and IL1B release. Its function is as follows. Isoform Bcl-X(S) promotes apoptosis. This chain is Bcl-2-like protein 1 (Bcl2l1), found in Rattus norvegicus (Rat).